We begin with the raw amino-acid sequence, 65 residues long: Small ribosomal subunit protein bS21 (65 aa).

The interval 45-65 (GRLKRSRSRRRAQRANEERNS) is disordered. Residues 48 to 57 (KRSRSRRRAQ) show a composition bias toward basic residues.

Belongs to the bacterial ribosomal protein bS21 family.

In Chlorobium phaeobacteroides (strain DSM 266 / SMG 266 / 2430), this protein is Small ribosomal subunit protein bS21.